A 388-amino-acid chain; its full sequence is S-adenosylmethionine synthase 1 (388 aa).

Position 11 (Glu11) interacts with Mg(2+). Residue His17 coordinates ATP. Glu45 is a binding site for K(+). Residues Glu58 and Gln101 each contribute to the L-methionine site. ATP is bound by residues Asp168–Lys170, Ser233–Phe236, Asp244, Arg250–Lys251, Ala267, Lys271, and Lys275. Asp244 serves as a coordination point for L-methionine. Residue Lys275 coordinates L-methionine.

This sequence belongs to the AdoMet synthase family. As to quaternary structure, homotetramer. The cofactor is Mn(2+). It depends on Mg(2+) as a cofactor. Co(2+) is required as a cofactor. K(+) serves as cofactor. Mostly in Roots.

The protein localises to the cytoplasm. It carries out the reaction L-methionine + ATP + H2O = S-adenosyl-L-methionine + phosphate + diphosphate. It functions in the pathway amino-acid biosynthesis; S-adenosyl-L-methionine biosynthesis; S-adenosyl-L-methionine from L-methionine: step 1/1. Its function is as follows. Catalyzes the formation of S-adenosylmethionine from methionine and ATP. The reaction comprises two steps that are both catalyzed by the same enzyme: formation of S-adenosylmethionine (AdoMet) and triphosphate, and subsequent hydrolysis of the triphosphate. The chain is S-adenosylmethionine synthase 1 (SAMS1) from Pinus contorta (Shore pine).